The chain runs to 424 residues: Tubulin-specific chaperone cofactor E-like protein (424 aa).

2 positions are modified to phosphoserine: Ser18 and Ser41. 7 LRR repeats span residues 73–98 (CAHV…IVSN), 99–123 (VPQL…TCAG), 124–147 (SFSG…HTIL), 150–172 (LPDL…PSVC), 173–197 (CHSL…KLGV), 199–224 (FPSL…SLAR), and 226–250 (FPNL…KLNS). One can recognise an LRRCT domain in the interval 262–303 (IPLLQPYTTEERRKLVVARLPSVSKLNGSVVTDGEREDSERF). In terms of domain architecture, Ubiquitin-like spans 334–424 (AEVDLRPQSS…DKIFVESKTK (91 aa)). The stretch at 350-375 (FNDQVEEVSIRLDQTVAELKRQLKTL) forms a coiled coil.

It localises to the cytoplasm. The protein resides in the cytoskeleton. In terms of biological role, acts as a regulator of tubulin stability. In Rattus norvegicus (Rat), this protein is Tubulin-specific chaperone cofactor E-like protein (Tbcel).